A 258-amino-acid polypeptide reads, in one-letter code: Imidazole glycerol phosphate synthase subunit HisF (258 aa).

Catalysis depends on residues aspartate 11 and aspartate 130.

This sequence belongs to the HisA/HisF family. Heterodimer of HisH and HisF.

Its subcellular location is the cytoplasm. It catalyses the reaction 5-[(5-phospho-1-deoxy-D-ribulos-1-ylimino)methylamino]-1-(5-phospho-beta-D-ribosyl)imidazole-4-carboxamide + L-glutamine = D-erythro-1-(imidazol-4-yl)glycerol 3-phosphate + 5-amino-1-(5-phospho-beta-D-ribosyl)imidazole-4-carboxamide + L-glutamate + H(+). It participates in amino-acid biosynthesis; L-histidine biosynthesis; L-histidine from 5-phospho-alpha-D-ribose 1-diphosphate: step 5/9. Its function is as follows. IGPS catalyzes the conversion of PRFAR and glutamine to IGP, AICAR and glutamate. The HisF subunit catalyzes the cyclization activity that produces IGP and AICAR from PRFAR using the ammonia provided by the HisH subunit. The sequence is that of Imidazole glycerol phosphate synthase subunit HisF from Escherichia coli O127:H6 (strain E2348/69 / EPEC).